A 1175-amino-acid chain; its full sequence is MWRWVRQQLGFDPPHQSDTRTIYIANRFPQNGLYTPQKFIDNRIISSKYTIWNFVPKNLFEQFRRVANFYFLIIFLVQLMIDTPTSPITSGLPLFFVITVTAIKQGYEDWLRHNSDNEVNGAPVYVVRSGGLVKTRSKNIRVGDIVRIAKDEIFPADLVLLSSDRLDGSCHVTTASLDGETNLKTHVSVPETAVLQTVANLDSLIAVIECQQPEADLYRFMGRMIITQQMEEIVRPLGPESLLLRGARLKNTKEIFGVAVYTGMETKMALNYKSKSQKRSAVEKSMNTFLIIYLIILISEAIISTILKYTWQAEEKWDEPWYNQKTEHQRNSSKILRFISDFLAFLVLYNFIIPISLYVTVEMQKFLGSFFIGWDLDLYHEESDQKAQVNTSDLNEELGQVEYVFTDKTGTLTENEMQFRECSINGLKYQEINGKLVPEGPSPDSTEGEVPFLGSLSHLSNSAHLTATSLRTSPESETELIKEHDLFFKAVSLCHTVQISNVQTDGIGDGPWQPNLAPAQLEYYASSPDEKALVEAAARAGIIFVGISEETMEVKVLGRLERYKLLHILEFDSDRRRMSVIVQAPSGEKLLFAKGAESSILPKCIGGEIAKTRIHVDEFALKGLRTLCIAYRQFTAKEYEDVDRRLFEARTALQHREEKLADAFQYIEKDLILLGATAVEDRLQDKVRETIEALRMAGIKVWVLTGDKHETAVSVSLSCGHFHRTMNILELINQKSDSGCAEQLRQLARRITEDHVIQHGLVVDGTSLSLALREHEKLFMEVCRNCSAVLCCRMAPLQKAKVIRLIKISPEKPITLAVGDGANDVSMIQEAHVGIGIMGKEGRQAARNSDYAIARFKFLSKLLFVHGHFYYIRIATLVQYFFYKNVCFITPQFLYQFYCLFSQQTLYDSVYLTLYNICFTSLPVLIYSLVEQHIDPHVLQSKPTLYRDISKNGLLSIKAFLYWTVLGFSHAFIFFFGSYFLVGKDTSLLGNGQMFGNWTFGTLVFTVMVITVTVKMALETHFWTWINHLVTWGSIIFYFIFSLFYGGILWPFLGSQNMYFVFIQLLSSGSAWFAILLMVVTCLFIDVVKKVFDRQLHPTSTEKAQLAEAHSSVKCLDSVCCFPGETPCASVGRMLERVIGRCSPNHISRLWNASDPFYTNDRSILTLSPMDSSTC.

The next 4 membrane-spanning stretches (helical) occupy residues phenylalanine 69–threonine 89, glycine 91–leucine 111, asparagine 287–leucine 307, and phenylalanine 338–tyrosine 358. Aspartate 407 functions as the 4-aspartylphosphate intermediate in the catalytic mechanism. ATP contacts are provided by aspartate 407, lysine 408, threonine 409, glutamate 530, phenylalanine 571, lysine 594, arginine 625, threonine 705, glycine 706, aspartate 707, arginine 793, and lysine 799. Aspartate 407 contributes to the Mg(2+) binding site. Threonine 409 contributes to the Mg(2+) binding site. Residue aspartate 820 participates in Mg(2+) binding. ATP is bound by residues asparagine 823 and aspartate 824. Aspartate 824 contacts Mg(2+). The next 6 membrane-spanning stretches (helical) occupy residues leucine 862–phenylalanine 882, valine 910–valine 930, tryptophan 963–glycine 983, methionine 994–valine 1014, glycine 1033–leucine 1053, and phenylalanine 1060–valine 1080.

The protein belongs to the cation transport ATPase (P-type) (TC 3.A.3) family. Type IV subfamily. Component of a P4-ATPase flippase complex which consists of a catalytic alpha subunit ATP11B and an accessory beta subunit TMEM30A. It depends on Mg(2+) as a cofactor. Expressed in retina, brain, liver, testes and kidney (at protein level).

The protein localises to the recycling endosome membrane. The protein resides in the early endosome. It is found in the endoplasmic reticulum. It localises to the golgi apparatus. Its subcellular location is the trans-Golgi network. It catalyses the reaction ATP + H2O + phospholipidSide 1 = ADP + phosphate + phospholipidSide 2.. The enzyme catalyses a 1,2-diacyl-sn-glycero-3-phospho-L-serine(out) + ATP + H2O = a 1,2-diacyl-sn-glycero-3-phospho-L-serine(in) + ADP + phosphate + H(+). The catalysed reaction is a 1,2-diacyl-sn-glycero-3-phosphoethanolamine(out) + ATP + H2O = a 1,2-diacyl-sn-glycero-3-phosphoethanolamine(in) + ADP + phosphate + H(+). Catalytic component of a P4-ATPase flippase complex which catalyzes the hydrolysis of ATP coupled to the transport of aminophospholipids, phosphatidylserines (PS) and phosphatidylethanolamines (PE), from the outer to the inner leaflet of intracellular membranes. May contribute to the maintenance of membrane lipid asymmetry in endosome compartment. The protein is Phospholipid-transporting ATPase IF of Mus musculus (Mouse).